A 202-amino-acid chain; its full sequence is Pyridoxal 5'-phosphate synthase subunit PdxT (202 aa).

52–54 (GES) is a binding site for L-glutamine. Cysteine 84 acts as the Nucleophile in catalysis. Residues arginine 116 and 143 to 144 (IR) contribute to the L-glutamine site. Active-site charge relay system residues include histidine 184 and glutamate 186.

It belongs to the glutaminase PdxT/SNO family. In terms of assembly, in the presence of PdxS, forms a dodecamer of heterodimers. Only shows activity in the heterodimer.

It catalyses the reaction aldehydo-D-ribose 5-phosphate + D-glyceraldehyde 3-phosphate + L-glutamine = pyridoxal 5'-phosphate + L-glutamate + phosphate + 3 H2O + H(+). The enzyme catalyses L-glutamine + H2O = L-glutamate + NH4(+). The protein operates within cofactor biosynthesis; pyridoxal 5'-phosphate biosynthesis. Functionally, catalyzes the hydrolysis of glutamine to glutamate and ammonia as part of the biosynthesis of pyridoxal 5'-phosphate. The resulting ammonia molecule is channeled to the active site of PdxS. In Pyrobaculum neutrophilum (strain DSM 2338 / JCM 9278 / NBRC 100436 / V24Sta) (Thermoproteus neutrophilus), this protein is Pyridoxal 5'-phosphate synthase subunit PdxT.